The sequence spans 274 residues: Triosephosphate isomerase (274 aa).

31–33 (NWK) provides a ligand contact to substrate. H118 serves as the catalytic Electrophile. E188 acts as the Proton acceptor in catalysis. Residues G194, S234, and 255–256 (GG) each bind substrate.

This sequence belongs to the triosephosphate isomerase family. As to quaternary structure, homodimer.

It is found in the cytoplasm. The enzyme catalyses D-glyceraldehyde 3-phosphate = dihydroxyacetone phosphate. Its pathway is carbohydrate biosynthesis; gluconeogenesis. It functions in the pathway carbohydrate degradation; glycolysis; D-glyceraldehyde 3-phosphate from glycerone phosphate: step 1/1. Its function is as follows. Involved in the gluconeogenesis. Catalyzes stereospecifically the conversion of dihydroxyacetone phosphate (DHAP) to D-glyceraldehyde-3-phosphate (G3P). The protein is Triosephosphate isomerase of Chlamydia trachomatis serovar A (strain ATCC VR-571B / DSM 19440 / HAR-13).